Here is a 107-residue protein sequence, read N- to C-terminus: Small ribosomal subunit protein bS16 (107 aa).

Residues 85–107 are disordered; sequence REARNNPEKAVPRKERKAAEAGK.

The protein belongs to the bacterial ribosomal protein bS16 family.

This chain is Small ribosomal subunit protein bS16, found in Rhodopseudomonas palustris (strain BisB5).